The primary structure comprises 479 residues: Baeyer-Villiger monooxygenase AacuH (479 aa).

The interval 14 to 34 is disordered; sequence DSLGHPDGASRPPVSAESLSR.

This sequence belongs to the AflY oxidoreductase family.

It participates in secondary metabolite biosynthesis. Baeyer-Villiger monooxygenase; part of the gene cluster that mediates the biosynthesis of the tetrahydroxanthone dimer secalonic acid D. The pathway begins with the synthesis of atrochrysone thioester by the polyketide synthase AacuL. The atrochrysone carboxyl ACP thioesterase AacuM then breaks the thioester bond and releases the atrochrysone carboxylic acid from AacuL. Atrochrysone carboxylic acid is decarboxylated by the decarboxylase AacuI, and oxidized by the anthrone oxygenase AacuG to yield emodin. Emodin is then reduced to emodin hydroquinone by a yet unidentified oxidoreductase. A-ring reduction by the short chain dehydrogenase AacuN, dehydration by the scytalone dehydratase-like protein AacuK and probable spontaneous re-oxidation, results in overall deoxygenation to chrysophanol. Baeyer-Villiger oxidation by the Baeyer-Villiger monooxygenase (BVMO) AacuH then yields monodictyphenone. Monodictyphenone is transformed into compounds with the tetrahydroxanthone skeleton via methylesterification by the methyltransferase AacuQ, followed by the action of the flavin-dependent monooxygenase AacuC, the isomerase AacuP, and the short chain dehydrogenase/reductase AacuF or AacuD. AacuF and AacuD should accept the same compound as a substrate but perform the ketoreduction with a different stereoselectivity, thus yielding blennolides B and A, respectively. In the final step of the biosynthesis, the cytochrome P450 monooxygenase AacuE accepts blennolide B and/or blennolide A to conduct the dimerization reaction to furnish the tetrahydroxanthone dimers, secalonic acids D, B, and F. The chain is Baeyer-Villiger monooxygenase AacuH from Aspergillus aculeatus (strain ATCC 16872 / CBS 172.66 / WB 5094).